The chain runs to 296 residues: UDP-N-acetylenolpyruvoylglucosamine reductase (296 aa).

Residues 19 to 203 (KVGGFAEYFS…LETTQKNLKK (185 aa)) enclose the FAD-binding PCMH-type domain. The active site involves arginine 166. Serine 217 acts as the Proton donor in catalysis. The active site involves glutamate 287.

Belongs to the MurB family. Requires FAD as cofactor.

The protein resides in the cytoplasm. It carries out the reaction UDP-N-acetyl-alpha-D-muramate + NADP(+) = UDP-N-acetyl-3-O-(1-carboxyvinyl)-alpha-D-glucosamine + NADPH + H(+). The protein operates within cell wall biogenesis; peptidoglycan biosynthesis. Cell wall formation. This is UDP-N-acetylenolpyruvoylglucosamine reductase from Prochlorococcus marinus subsp. pastoris (strain CCMP1986 / NIES-2087 / MED4).